Reading from the N-terminus, the 691-residue chain is Tumor necrosis factor alpha-induced protein 2 (691 aa).

The interval Gln-9–Leu-111 is disordered. The span at Pro-12–Arg-31 shows a compositional bias: polar residues. Residues Thr-33 to Ala-45 are compositionally biased toward low complexity. The segment covering Gln-91–Leu-107 has biased composition (basic and acidic residues).

The protein belongs to the SEC6 family.

Its function is as follows. May play a role as a mediator of inflammation and angiogenesis. The chain is Tumor necrosis factor alpha-induced protein 2 (Tnfaip2) from Mus musculus (Mouse).